Consider the following 665-residue polypeptide: Translation factor GUF1 homolog, mitochondrial (665 aa).

The transit peptide at 1–35 (MAGAAVLRRSARRIYRHLAAAPAFSRSVLQQPKRL) directs the protein to the mitochondrion. The disordered stretch occupies residues 34-53 (RLLSSQSSPEHGARGAVSGS). One can recognise a tr-type G domain in the interval 61–249 (ERVRNFSIIA…AVIERIPSPP (189 aa)). Residues 70 to 77 (AHVDHGKS), 142 to 146 (DTPGH), and 196 to 199 (NKID) each bind GTP.

This sequence belongs to the TRAFAC class translation factor GTPase superfamily. Classic translation factor GTPase family. LepA subfamily.

The protein resides in the mitochondrion inner membrane. The enzyme catalyses GTP + H2O = GDP + phosphate + H(+). In terms of biological role, promotes mitochondrial protein synthesis. May act as a fidelity factor of the translation reaction, by catalyzing a one-codon backward translocation of tRNAs on improperly translocated ribosomes. Binds to mitochondrial ribosomes in a GTP-dependent manner. This is Translation factor GUF1 homolog, mitochondrial from Sorghum bicolor (Sorghum).